A 376-amino-acid chain; its full sequence is Alanine racemase (376 aa).

Catalysis depends on K40, which acts as the Proton acceptor; specific for D-alanine. The residue at position 40 (K40) is an N6-(pyridoxal phosphate)lysine. R138 serves as a coordination point for substrate. Y270 serves as the catalytic Proton acceptor; specific for L-alanine. M317 contributes to the substrate binding site.

Belongs to the alanine racemase family. Pyridoxal 5'-phosphate serves as cofactor.

It catalyses the reaction L-alanine = D-alanine. Its pathway is amino-acid biosynthesis; D-alanine biosynthesis; D-alanine from L-alanine: step 1/1. Catalyzes the interconversion of L-alanine and D-alanine. May also act on other amino acids. This is Alanine racemase (alr) from Lactobacillus gasseri (strain ATCC 33323 / DSM 20243 / BCRC 14619 / CIP 102991 / JCM 1131 / KCTC 3163 / NCIMB 11718 / NCTC 13722 / AM63).